The following is an 885-amino-acid chain: Sensor histidine kinase KdpD (885 aa).

4 helical membrane-spanning segments follow: residues 384–404 (AIDMLKMILIQIICVMMGLWI), 415–435 (IILMIFLIGIILLSIWTRSFI), 436–456 (IGFLAAIINVFVFNYFFTEPR), and 464–484 (FDYPITFIVSILTSILTSALL). Residues 660–880 (SISHDIRTPL…IFYFNIYTDF (221 aa)) form the Histidine kinase domain. Histidine 663 is subject to Phosphohistidine; by autocatalysis.

The protein resides in the membrane. The enzyme catalyses ATP + protein L-histidine = ADP + protein N-phospho-L-histidine.. Its activity is regulated as follows. Cyclic di-AMP is a negative regulator of the Kdp system. Its function is as follows. Member of the two-component regulatory system KdpD/KdpE that regulates the transcription of a series of virulence factors through sensing external K(+) concentrations. Also regulates capsular polysaccharide production. May function as a membrane-associated protein kinase that phosphorylates KdpE in response to environmental signals. In turn, KpdE functions as a transcriptional regulator by direct binding to promoter regions of target genes including spa, hla, aur and geh. This Staphylococcus aureus (strain NCTC 8325 / PS 47) protein is Sensor histidine kinase KdpD.